We begin with the raw amino-acid sequence, 231 residues long: Cytidylate kinase 1 (231 aa).

Residue G7–T15 participates in ATP binding.

This sequence belongs to the cytidylate kinase family. Type 1 subfamily.

Its subcellular location is the cytoplasm. It carries out the reaction CMP + ATP = CDP + ADP. It catalyses the reaction dCMP + ATP = dCDP + ADP. This is Cytidylate kinase 1 from Haemophilus influenzae (strain ATCC 51907 / DSM 11121 / KW20 / Rd).